Here is a 141-residue protein sequence, read N- to C-terminus: Flagellar assembly factor FliW (141 aa).

This sequence belongs to the FliW family. As to quaternary structure, interacts with translational regulator CsrA and flagellin(s).

It localises to the cytoplasm. Its function is as follows. Acts as an anti-CsrA protein, binds CsrA and prevents it from repressing translation of its target genes, one of which is flagellin. Binds to flagellin and participates in the assembly of the flagellum. The protein is Flagellar assembly factor FliW of Clostridium botulinum (strain Alaska E43 / Type E3).